A 933-amino-acid polypeptide reads, in one-letter code: MALSQLQCLDNNHVNWRTSEGKAEFFYSEEQRLALEALLSQGVDAFHGVVKGENIRDFLSELEMSRVLSRLEPFDPDCCHCRPDGEEGDEGIGEQDGAQSLEYWPDRSDCSIPDLDLGWPEAFAYRGVTRATVYMQPPVDGQPHIKEVVRKMINQAQKVIAVVMDHFTDIDIFRDLLDAGFKRKVSVYVILNETDVKYFLQMCEKAQMHKGHVKNLRIRTVGGSEFYTRFSTKFKGSLGQKFMFVDGDKAICGSYSFTWSASRIDRNLITMLSGQVVETFDRQFQDLYLLSKGVSLKNIPMENEPEPEPVLQTATVPTAVSESIAKKLINPKYSLVKTKSASDTGAEKEKNSSNCNNMATKPKPKPTEQPPQEQKHPALHNMEKANMFDYLPTWVEPDPEPGSDILGYINIIDPTIKNPHLSQMNRIKIWDTSQATAQFLLDKEQELKQTECQKGSETSQEQTSSKVETHEPYSEKEKSGHGYSETTTVKKEEESSENLVHTSKVDQGRMEHSPSKATSLTQVSQQNQSMDLNEAEKSPSQSRGSKASQTSQGKESMPSNSSGVTLGGQTVSNTEESSVASPGPYEDLEKEPVKDTVDELEDTSIKDPPLENFESLLKSQHLIIPSNTEPVTGPPVPKPRTLPVADFINMKNAQNANIGSPSPCLADSIMPSVNGLDTEGTEDTTHSEKAEEDSDEGVQYFSSGSGSLPPSSSSSVSEEYYLTTSVQRRNSEDPVYNGEFFPVQRKMSEGHISRGSFLSPFHFRQTVMDLGQMENGQRRNPGLEQELQMAMADRHPMHGNEMIYSMEPTQGKPVYPFGTNGLSPSYERLQMHRQAKNPGRARGREESTGVLRGYPQIRNPEGLALRHGFWGPSHAANQPSPLTSNPMPAEHPSTPFGIPFSKLAQAKHLKTKMGASNLDSRRRGHGYLGHKDQ.

4 disordered regions span residues 339–375 (KSAS…QEQK), 450–716 (TECQ…SSSV), 870–899 (WGPS…FGIP), and 911–933 (TKMG…HKDQ). Residues 452–466 (CQKGSETSQEQTSSK) are compositionally biased toward polar residues. Composition is skewed to basic and acidic residues over residues 467-480 (VETH…EKSG) and 503-514 (SKVDQGRMEHSP). 2 stretches are compositionally biased toward polar residues: residues 515–531 (SKAT…QSMD) and 538–580 (SPSQ…SSVA). Residues 590-609 (KEPVKDTVDELEDTSIKDPP) are compositionally biased toward basic and acidic residues. The segment covering 651-660 (KNAQNANIGS) has biased composition (polar residues). Low complexity predominate over residues 702–716 (SSGSGSLPPSSSSSV). A compositionally biased stretch (polar residues) spans 875 to 886 (AANQPSPLTSNP).

The protein belongs to the FAM83 family. As to quaternary structure, interacts with SMAD1 (via MH2 domain); in a SMAD4-independent manner.

The protein resides in the cytoplasm. Its subcellular location is the cytosol. It is found in the nucleus. Its function is as follows. Substrate for type I BMP receptor kinase involved in regulation of some target genes of the BMP signaling pathway. May also play a role in other signaling pathways. In Xenopus laevis (African clawed frog), this protein is Protein FAM83G (fam83g).